The primary structure comprises 355 residues: Peptide chain release factor 1 (355 aa).

Q231 bears the N5-methylglutamine mark.

This sequence belongs to the prokaryotic/mitochondrial release factor family. Post-translationally, methylated by PrmC. Methylation increases the termination efficiency of RF1.

It is found in the cytoplasm. In terms of biological role, peptide chain release factor 1 directs the termination of translation in response to the peptide chain termination codons UAG and UAA. The chain is Peptide chain release factor 1 from Wolinella succinogenes (strain ATCC 29543 / DSM 1740 / CCUG 13145 / JCM 31913 / LMG 7466 / NCTC 11488 / FDC 602W) (Vibrio succinogenes).